The primary structure comprises 70 residues: Small ribosomal subunit protein bS21B (70 aa).

It belongs to the bacterial ribosomal protein bS21 family.

This is Small ribosomal subunit protein bS21B from Rhizobium etli (strain ATCC 51251 / DSM 11541 / JCM 21823 / NBRC 15573 / CFN 42).